The chain runs to 300 residues: Protoheme IX farnesyltransferase 1 (300 aa).

9 helical membrane-spanning segments follow: residues 28–48, 54–74, 100–120, 122–142, 149–169, 176–196, 222–242, 243–263, and 280–300; these read VVALMLLTVLVGMCLAMPTIL, VAGLLGIAMMAGSAAALNHLI, ALLFAALLGSLGFVILYVFTN, LTAWLTFASLIGYALIYTAYL, NIVIGGLAGAMPPLLGWTAVT, ALLLVIIIFLWTPPHFWALAI, CILLYTILLAIACLLPVLVGM, SGPLYFVCSSLLSTGFIYKAW, and FSIYHLMLLFMALLLDHYLWA.

It belongs to the UbiA prenyltransferase family. Protoheme IX farnesyltransferase subfamily.

The protein resides in the cell inner membrane. It carries out the reaction heme b + (2E,6E)-farnesyl diphosphate + H2O = Fe(II)-heme o + diphosphate. It functions in the pathway porphyrin-containing compound metabolism; heme O biosynthesis; heme O from protoheme: step 1/1. Converts heme B (protoheme IX) to heme O by substitution of the vinyl group on carbon 2 of heme B porphyrin ring with a hydroxyethyl farnesyl side group. This is Protoheme IX farnesyltransferase 1 from Shewanella sp. (strain MR-4).